The following is a 134-amino-acid chain: Iron-sulfur cluster insertion protein ErpA (134 aa).

Positions 47, 126, and 128 each coordinate iron-sulfur cluster.

The protein belongs to the HesB/IscA family. Homodimer. Requires iron-sulfur cluster as cofactor.

In terms of biological role, required for insertion of 4Fe-4S clusters for at least IspG. The chain is Iron-sulfur cluster insertion protein ErpA from Coxiella burnetii (strain Dugway 5J108-111).